Consider the following 345-residue polypeptide: N-acetyl-gamma-glutamyl-phosphate reductase (345 aa).

Cys149 is a catalytic residue.

It belongs to the NAGSA dehydrogenase family. Type 1 subfamily.

The protein resides in the cytoplasm. The catalysed reaction is N-acetyl-L-glutamate 5-semialdehyde + phosphate + NADP(+) = N-acetyl-L-glutamyl 5-phosphate + NADPH + H(+). The protein operates within amino-acid biosynthesis; L-arginine biosynthesis; N(2)-acetyl-L-ornithine from L-glutamate: step 3/4. In terms of biological role, catalyzes the NADPH-dependent reduction of N-acetyl-5-glutamyl phosphate to yield N-acetyl-L-glutamate 5-semialdehyde. In Bacillus subtilis (strain 168), this protein is N-acetyl-gamma-glutamyl-phosphate reductase.